Here is a 354-residue protein sequence, read N- to C-terminus: Serum paraoxonase/arylesterase 2 (354 aa).

A disulfide bridge connects residues Cys42 and Cys352. Residues Asp53 and Asp54 each contribute to the Ca(2+) site. The active-site Proton acceptor is His114. Ca(2+) contacts are provided by Ile116, Asn167, Asp168, and Asn223. Residue Asn254 is glycosylated (N-linked (GlcNAc...) asparagine). Asp268 and Asn269 together coordinate Ca(2+). N-linked (GlcNAc...) asparagine glycans are attached at residues Asn269 and Asn323.

Belongs to the paraoxonase family. Homotrimer. Ca(2+) is required as a cofactor. In terms of processing, glycosylated. The signal sequence is not cleaved.

It is found in the membrane. It carries out the reaction a phenyl acetate + H2O = a phenol + acetate + H(+). The catalysed reaction is an N-acyl-L-homoserine lactone + H2O = an N-acyl-L-homoserine + H(+). Its function is as follows. Capable of hydrolyzing lactones and a number of aromatic carboxylic acid esters. The protein is Serum paraoxonase/arylesterase 2 (PON2) of Canis lupus familiaris (Dog).